We begin with the raw amino-acid sequence, 258 residues long: UPF0246 protein Pnec_1068 (258 aa).

It belongs to the UPF0246 family.

This chain is UPF0246 protein Pnec_1068, found in Polynucleobacter necessarius subsp. necessarius (strain STIR1).